Reading from the N-terminus, the 204-residue chain is Thiamine-phosphate synthase (204 aa).

Residues 35 to 39 and Asn67 contribute to the 4-amino-2-methyl-5-(diphosphooxymethyl)pyrimidine site; that span reads QVREK. Positions 68 and 87 each coordinate Mg(2+). 4-amino-2-methyl-5-(diphosphooxymethyl)pyrimidine is bound at residue Ser106. A 2-[(2R,5Z)-2-carboxy-4-methylthiazol-5(2H)-ylidene]ethyl phosphate-binding site is contributed by 132 to 134; it reads TPT. Lys135 lines the 4-amino-2-methyl-5-(diphosphooxymethyl)pyrimidine pocket. 2-[(2R,5Z)-2-carboxy-4-methylthiazol-5(2H)-ylidene]ethyl phosphate is bound by residues Gly163 and 183 to 184; that span reads VS.

This sequence belongs to the thiamine-phosphate synthase family. Mg(2+) is required as a cofactor.

The catalysed reaction is 2-[(2R,5Z)-2-carboxy-4-methylthiazol-5(2H)-ylidene]ethyl phosphate + 4-amino-2-methyl-5-(diphosphooxymethyl)pyrimidine + 2 H(+) = thiamine phosphate + CO2 + diphosphate. The enzyme catalyses 2-(2-carboxy-4-methylthiazol-5-yl)ethyl phosphate + 4-amino-2-methyl-5-(diphosphooxymethyl)pyrimidine + 2 H(+) = thiamine phosphate + CO2 + diphosphate. It carries out the reaction 4-methyl-5-(2-phosphooxyethyl)-thiazole + 4-amino-2-methyl-5-(diphosphooxymethyl)pyrimidine + H(+) = thiamine phosphate + diphosphate. The protein operates within cofactor biosynthesis; thiamine diphosphate biosynthesis; thiamine phosphate from 4-amino-2-methyl-5-diphosphomethylpyrimidine and 4-methyl-5-(2-phosphoethyl)-thiazole: step 1/1. Functionally, condenses 4-methyl-5-(beta-hydroxyethyl)thiazole monophosphate (THZ-P) and 2-methyl-4-amino-5-hydroxymethyl pyrimidine pyrophosphate (HMP-PP) to form thiamine monophosphate (TMP). The chain is Thiamine-phosphate synthase from Vibrio parahaemolyticus serotype O3:K6 (strain RIMD 2210633).